Here is a 447-residue protein sequence, read N- to C-terminus: N-succinylarginine dihydrolase (447 aa).

Residues 19–28, Asn-110, and 137–138 each bind substrate; these read AGLSFGNEAS and HR. Residue Glu-174 is part of the active site. Arg-212 is a binding site for substrate. His-248 is an active-site residue. Asp-250 and Asn-359 together coordinate substrate. Cys-365 functions as the Nucleophile in the catalytic mechanism.

The protein belongs to the succinylarginine dihydrolase family. In terms of assembly, homodimer.

The catalysed reaction is N(2)-succinyl-L-arginine + 2 H2O + 2 H(+) = N(2)-succinyl-L-ornithine + 2 NH4(+) + CO2. Its pathway is amino-acid degradation; L-arginine degradation via AST pathway; L-glutamate and succinate from L-arginine: step 2/5. Functionally, catalyzes the hydrolysis of N(2)-succinylarginine into N(2)-succinylornithine, ammonia and CO(2). The protein is N-succinylarginine dihydrolase of Escherichia coli O1:K1 / APEC.